Reading from the N-terminus, the 172-residue chain is Large ribosomal subunit protein uL10 (172 aa).

This sequence belongs to the universal ribosomal protein uL10 family. Part of the ribosomal stalk of the 50S ribosomal subunit. The N-terminus interacts with L11 and the large rRNA to form the base of the stalk. The C-terminus forms an elongated spine to which L12 dimers bind in a sequential fashion forming a multimeric L10(L12)X complex.

Functionally, forms part of the ribosomal stalk, playing a central role in the interaction of the ribosome with GTP-bound translation factors. This is Large ribosomal subunit protein uL10 from Brucella suis (strain ATCC 23445 / NCTC 10510).